The chain runs to 145 residues: D-aminoacyl-tRNA deacylase (145 aa).

Residues 137-138 (GP) carry the Gly-cisPro motif, important for rejection of L-amino acids motif.

It belongs to the DTD family. Homodimer.

The protein resides in the cytoplasm. The enzyme catalyses glycyl-tRNA(Ala) + H2O = tRNA(Ala) + glycine + H(+). The catalysed reaction is a D-aminoacyl-tRNA + H2O = a tRNA + a D-alpha-amino acid + H(+). An aminoacyl-tRNA editing enzyme that deacylates mischarged D-aminoacyl-tRNAs. Also deacylates mischarged glycyl-tRNA(Ala), protecting cells against glycine mischarging by AlaRS. Acts via tRNA-based rather than protein-based catalysis; rejects L-amino acids rather than detecting D-amino acids in the active site. By recycling D-aminoacyl-tRNA to D-amino acids and free tRNA molecules, this enzyme counteracts the toxicity associated with the formation of D-aminoacyl-tRNA entities in vivo and helps enforce protein L-homochirality. The chain is D-aminoacyl-tRNA deacylase from Francisella tularensis subsp. novicida (strain U112).